Reading from the N-terminus, the 198-residue chain is Ribonuclease HII (198 aa).

The region spanning Gln10–Ser198 is the RNase H type-2 domain. Positions 16, 17, and 108 each coordinate a divalent metal cation.

This sequence belongs to the RNase HII family. The cofactor is Mn(2+). Mg(2+) is required as a cofactor.

Its subcellular location is the cytoplasm. The catalysed reaction is Endonucleolytic cleavage to 5'-phosphomonoester.. Its function is as follows. Endonuclease that specifically degrades the RNA of RNA-DNA hybrids. The sequence is that of Ribonuclease HII from Shigella dysenteriae serotype 1 (strain Sd197).